A 1218-amino-acid chain; its full sequence is Protein dispatched (1218 aa).

The helical transmembrane segment at 21 to 41 (YLVVVSIAVYCVACIIVALVL) threads the bilayer. The segment at 99–135 (VETKLHPNHRRRKNKHKNRNKNKRRKEQNQSSHEHHD) is disordered. Basic residues predominate over residues 104–124 (HPNHRRRKNKHKNRNKNKRRK). N-linked (GlcNAc...) asparagine glycans are attached at residues Asn-127, Asn-176, Asn-197, Asn-264, Asn-319, and Asn-388. Positions 430–624 (AMDLGLENEL…ITWLPASVSI (195 aa)) constitute an SSD domain. The next 6 helical transmembrane spans lie at 443–463 (LLLT…ASVW), 473–493 (LMSC…YAIV), 504–524 (LLAV…FLKI), 570–590 (AAAS…ASYS), 598–618 (CFGI…ITWL), and 670–690 (AYLW…IVFW). N-linked (GlcNAc...) asparagine glycans are attached at residues Asn-767, Asn-883, and Asn-891. 5 helical membrane-spanning segments follow: residues 975 to 995 (LAVL…VLTV), 996 to 1016 (SLSI…LNIL), 1019 to 1039 (IAVS…GIHY), 1058 to 1078 (IIGP…IMMA), and 1087 to 1107 (IGVF…FFLM).

The protein belongs to the dispatched family.

It is found in the membrane. In terms of biological role, segment polarity protein which functions in hedgehog (Hh) signaling. Regulates the trafficking and the release of cholesterol-modified hedgehog protein from cells of the posterior compartment (P cells) and is hence required for the effective production of the Hh signal. This chain is Protein dispatched (disp), found in Drosophila melanogaster (Fruit fly).